We begin with the raw amino-acid sequence, 157 residues long: Globin (157 aa).

An N-acetylglycine modification is found at glycine 1. The Globin domain maps to 8–155 (SLSADQKAAI…MANIIDAEQK (148 aa)). Heme b contacts are provided by histidine 70 and histidine 102.

It belongs to the globin family. Monomer.

This Nerita albicilla (Ox-palate nerite) protein is Globin.